The chain runs to 493 residues: Trigger factor (493 aa).

Residues 162 to 243 (GDFVSLDLSA…VRGVKEKELP (82 aa)) form the PPIase FKBP-type domain. A disordered region spans residues 432–493 (ELALPARPAP…AAVDSGDRDI (62 aa)). The segment covering 449 to 470 (HAGHDHEGHDHADHAGHDHAGD) has biased composition (basic and acidic residues). Positions 474-485 (AEPAEAPAATAA) are enriched in low complexity.

Belongs to the FKBP-type PPIase family. Tig subfamily.

The protein localises to the cytoplasm. It catalyses the reaction [protein]-peptidylproline (omega=180) = [protein]-peptidylproline (omega=0). In terms of biological role, involved in protein export. Acts as a chaperone by maintaining the newly synthesized protein in an open conformation. Functions as a peptidyl-prolyl cis-trans isomerase. The polypeptide is Trigger factor (Frankia alni (strain DSM 45986 / CECT 9034 / ACN14a)).